The sequence spans 238 residues: Lipoarabinomannan carrier protein LprG (238 aa).

A signal peptide spans 1-26; that stretch reads MQAPKHHRRLFAVLATLNTATAVIAG. A lipid anchor (N-palmitoyl cysteine) is attached at Cys27. Cys27 carries S-diacylglycerol cysteine lipidation.

This sequence belongs to the LppX/LprAFG lipoprotein family. Modified by Lgt on Cys-27 with an S-linked diacylglyceral, signal peptide is removed by LspA, Cys-27 is further modifed with a fatty acid on its amino group by Lnt yielding a triacylated protein. Probably glycosylated, which is required for T-cell activation.

Its subcellular location is the cell inner membrane. The protein resides in the secreted. It localises to the cell wall. Its function is as follows. Helps membrane protein ML0556 (P55) transport triacylglycerides (TAG) across the inner cell membrane into the periplasm and probably ultimately to the outer membrane. Binds TAG in its hydrophobic cavity and transfers it between lipid bilayers. TAG probably regulates lipid metabolism and growth regulation and plays a structural role in the outer membrane. Binds di- and triacylated phosphatidyl-myo-inositol mannosides (PIMs), and glycolipid lipoglycan modulins lipoarabinomannan (LAM) and lipomannan (LM), facilitating their recognition by TLR2. Required for activity of drug efflux transporter ML0556. Required, probably with ML0556, for normal surface localization of LAM. Functionally, constitutes a host TLR2 agonist (toll-like receptor) able to stimulate proliferation of CD4+ T-cells derived from a human leprosy patient following protein processing/presentation by MHC class II molecules in peripheral blood mononuclear cells. The sequence is that of Lipoarabinomannan carrier protein LprG from Mycobacterium leprae (strain TN).